The primary structure comprises 527 residues: Glucose transporter 1B/1C/1D/1F/2B (527 aa).

A disordered region spans residues 1 to 22 (MTERRDNVSHAPDAIEGPNDGA). Residues 1-43 (MTERRDNVSHAPDAIEGPNDGAHAEDTSPGFFSLENLGVAQVQ) lie on the Cytoplasmic side of the membrane. The helical transmembrane segment at 44-64 (VVGGTLNGYVIGYVAVYLLLY) threads the bilayer. The Extracellular segment spans residues 65–118 (LTATECKFTTEGACGGRKIYGCKWSGTTCKFENPKCSEGSDPSDSCKNEVAYTS). Residues 119 to 139 (VYSGIFACAMIVGSMVGSIIA) form a helical membrane-spanning segment. The Cytoplasmic segment spans residues 140-151 (GKCITTFGLKKS). A helical membrane pass occupies residues 152–172 (FIIVSITCTIACVVVQVAIEY). At 173–175 (NNY) the chain is on the extracellular side. The chain crosses the membrane as a helical span at residues 176 to 196 (YALCTGRVLIGLGVGILCSVF). The Cytoplasmic portion of the chain corresponds to 197–213 (PMYVNENAHPKLCKMDG). A helical transmembrane segment spans residues 214 to 234 (VLFQVFTTLGIMLAAMLGLIL). The Extracellular portion of the chain corresponds to 235–249 (DKTGASKEEANMAGR). The chain crosses the membrane as a helical span at residues 250–270 (LHVFSAVPLGLSVAMFLVGMF). Topologically, residues 271 to 299 (LRESTATFAQDDDGKADGGMDPNEYGWGQ) are cytoplasmic. Residues 300 to 320 (MLWPLFMGAVTAGTLQLTGIN) traverse the membrane as a helical segment. The Extracellular segment spans residues 321–338 (AVMNYAPKITENLGMDPS). A helical transmembrane segment spans residues 339–359 (LGNFLVMAWNFVTSLVAIPLA). The Cytoplasmic segment spans residues 360–372 (SRFTMRQMFITCS). A helical membrane pass occupies residues 373–393 (FVASCMCLFLCGIPVFPGVAG). Topologically, residues 394 to 403 (KEVKNGVATT) are extracellular. A helical transmembrane segment spans residues 404 to 424 (GIALFIAAFEFGVGSCFFVLA). The Cytoplasmic segment spans residues 425–436 (QDLFPPSFRPKG). A helical membrane pass occupies residues 437–457 (GSFVVMMQFIFNILINLLYPI). Topologically, residues 458 to 475 (TTEAISGGATGNQDKGQA) are extracellular. Residues 476 to 496 (VAFILFGLIGLICSVLQFFYL) traverse the membrane as a helical segment. Residues 497–527 (YPYDANQDHENDHGGEPVEQKTYPVEASPRN) lie on the Cytoplasmic side of the membrane. Over residues 506–515 (ENDHGGEPVE) the composition is skewed to basic and acidic residues. The segment at 506–527 (ENDHGGEPVEQKTYPVEASPRN) is disordered.

It belongs to the major facilitator superfamily. Sugar transporter (TC 2.A.1.1) family.

Its subcellular location is the membrane. Its function is as follows. Facilitative glucose transporter. This Trypanosoma brucei brucei protein is Glucose transporter 1B/1C/1D/1F/2B (THT1B).